We begin with the raw amino-acid sequence, 1040 residues long: Multidrug resistance protein MdtB (1040 aa).

12 helical membrane passes run 25 to 45 (LLMV…PVSA), 347 to 367 (LMMA…NIPA), 369 to 389 (IIPG…MVFL), 396 to 416 (LTLM…IVVI), 440 to 460 (IGFT…PLLF), 472 to 492 (FAIT…TLTP), 537 to 557 (WLTL…WVFI), 863 to 883 (LGST…VLGI), 888 to 908 (FIHP…ALLA), 911 to 931 (IAGS…IGIV), 968 to 988 (ILMT…STGV), and 998 to 1018 (IGMV…TPVI).

Belongs to the resistance-nodulation-cell division (RND) (TC 2.A.6) family. MdtB subfamily. Part of a tripartite efflux system composed of MdtA, MdtB and MdtC. MdtB forms a heteromultimer with MdtC.

It localises to the cell inner membrane. In terms of biological role, the MdtABC tripartite complex confers resistance against novobiocin and deoxycholate. This chain is Multidrug resistance protein MdtB, found in Escherichia coli O127:H6 (strain E2348/69 / EPEC).